We begin with the raw amino-acid sequence, 912 residues long: Type II beta methyltransferase M.BslI (912 aa).

This sequence belongs to the N(4)/N(6)-methyltransferase family. N(4) subfamily.

The catalysed reaction is a 2'-deoxycytidine in DNA + S-adenosyl-L-methionine = an N(4)-methyl-2'-deoxycytidine in DNA + S-adenosyl-L-homocysteine + H(+). Functionally, a beta subtype methylase. Recognizes the double-stranded sequence 5'-CCN(7)GG-3', methylates C-2 on both strands, and protects the DNA from cleavage by the BslI endonuclease. The protein is Type II beta methyltransferase M.BslI (bslIM) of Bacillus sp. (strain NEB-606).